The primary structure comprises 531 residues: MSGRGAGGFPLPPLSPGGGAVAAALGAPPPPAGPGMLPSPALRGPGPSGGMGVPGAAAFRPMGPAGPAAQYQRPGMSPGSRMPMAGLQVGPPAGSPFGTAAPLRPGMPPTMMDPFRKRLLVPQAQPPMPAQRRGLKRRKMADKVLPQRIRELVPESQAYMDLLAFERKLDQTIARKRMEIQEAIKKPLTQKRKLRIYISNTFSPSKADGDNAGTAGTPGGTPAADKVASWELRVEGKLLDDPSKQKRKFSSFFKSLVIELDKELYGPDNHLVEWHRMPTTQETDGFQVKRPGDLNVKCTLLLMLDHQPPQYKLDPRLARLLGVHTQTRAAIMQALWLYIKHNQLQDGHEREYINCNRYFRQIFSCGRLRFSEIPMKLAGLLQHPDPIVINHVISVDPNDQKKTACYDIDVEVDDPLKAQMSNFLASTTNQQEIASLDVKIHETIESINQLKTQRDFMLSFSTEPQDFIQEWLRSQRRDLKIITDVIGNPEEERRAAFYHQPWAQEAVGRHIFAKVQQRRQELEQVLGIRLT.

The disordered stretch occupies residues 20-85; it reads AVAAALGAPP…MSPGSRMPMA (66 aa). A compositionally biased stretch (low complexity) spans 34–45; sequence PGMLPSPALRGP. 2 positions are modified to asymmetric dimethylarginine: arginine 81 and arginine 104. Serine 203 bears the Phosphoserine mark. Residues 205-226 form a disordered region; it reads SKADGDNAGTAGTPGGTPAADK. Residues 210–225 are compositionally biased toward low complexity; that stretch reads DNAGTAGTPGGTPAAD. Threonine 217 carries the post-translational modification Phosphothreonine. Lysine 226 is covalently cross-linked (Glycyl lysine isopeptide (Lys-Gly) (interchain with G-Cter in SUMO2)). Residues 306–383 form the SWIB/MDM2 domain; it reads HQPPQYKLDP…PMKLAGLLQH (78 aa).

It belongs to the SMARCD family. Component of the multiprotein chromatin-remodeling complexes SWI/SNF: SWI/SNF-A (BAF), SWI/SNF-B (PBAF) and related complexes. The canonical complex contains a catalytic subunit (either SMARCA4/BRG1/BAF190A or SMARCA2/BRM/BAF190B), and at least SMARCE1, ACTL6A/BAF53, SMARCC1/BAF155, SMARCC2/BAF170, and SMARCB1/SNF5/BAF47. Other subunits specific to each of the complexes may also be present permitting several possible combinations developmentally and tissue specific. Component of the BAF complex, which includes at least actin (ACTB), ARID1A/BAF250A, ARID1B/BAF250B, SMARCA2/BRM, SMARCA4/BRG1, ACTL6A/BAF53, ACTL6B/BAF53B, SMARCE1/BAF57, SMARCC1/BAF155, SMARCC2/BAF170, SMARCB1/SNF5/INI1, and one or more SMARCD1/BAF60A, SMARCD2/BAF60B, or SMARCD3/BAF60C. In muscle cells, the BAF complex also contains DPF3. Component of the SWI/SNF-B (PBAF) chromatin remodeling complex, at least composed of SMARCA4/BRG1, SMARCB1/BAF47/SNF5, ACTL6A/BAF53A or ACTL6B/BAF53B, SMARCE1/BAF57, SMARCD1/BAF60A, SMARCD2/BAF60B, perhaps SMARCD3/BAF60C, SMARCC1/BAF155, SMARCC2/BAF170, PBRM1/BAF180, ARID2/BAF200 and actin (ACTB). Interacts with UNKL. Interacts with CEBPE. Ubiquitinated through a signaling process involving RAC1 and the RING finger protein UNKL.

It localises to the nucleus. Functionally, involved in transcriptional activation and repression of select genes by chromatin remodeling (alteration of DNA-nucleosome topology). Component of SWI/SNF chromatin remodeling complexes that carry out key enzymatic activities, changing chromatin structure by altering DNA-histone contacts within a nucleosome in an ATP-dependent manner. Critical regulator of myeloid differentiation, controlling granulocytopoiesis and the expression of genes involved in neutrophil granule formation. The polypeptide is SWI/SNF-related matrix-associated actin-dependent regulator of chromatin subfamily D member 2 (Smarcd2) (Mus musculus (Mouse)).